The sequence spans 456 residues: Methylenetetrahydrofolate--tRNA-(uracil-5-)-methyltransferase TrmFO (456 aa).

11-16 (GAGLAG) lines the FAD pocket.

The protein belongs to the MnmG family. TrmFO subfamily. It depends on FAD as a cofactor.

It localises to the cytoplasm. It carries out the reaction uridine(54) in tRNA + (6R)-5,10-methylene-5,6,7,8-tetrahydrofolate + NADH + H(+) = 5-methyluridine(54) in tRNA + (6S)-5,6,7,8-tetrahydrofolate + NAD(+). It catalyses the reaction uridine(54) in tRNA + (6R)-5,10-methylene-5,6,7,8-tetrahydrofolate + NADPH + H(+) = 5-methyluridine(54) in tRNA + (6S)-5,6,7,8-tetrahydrofolate + NADP(+). Catalyzes the folate-dependent formation of 5-methyl-uridine at position 54 (M-5-U54) in all tRNAs. This chain is Methylenetetrahydrofolate--tRNA-(uracil-5-)-methyltransferase TrmFO, found in Synechococcus sp. (strain CC9605).